A 359-amino-acid chain; its full sequence is Histidinol-phosphate aminotransferase (359 aa).

An N6-(pyridoxal phosphate)lysine modification is found at Lys217.

The protein belongs to the class-II pyridoxal-phosphate-dependent aminotransferase family. Histidinol-phosphate aminotransferase subfamily. Homodimer. The cofactor is pyridoxal 5'-phosphate.

The enzyme catalyses L-histidinol phosphate + 2-oxoglutarate = 3-(imidazol-4-yl)-2-oxopropyl phosphate + L-glutamate. The protein operates within amino-acid biosynthesis; L-histidine biosynthesis; L-histidine from 5-phospho-alpha-D-ribose 1-diphosphate: step 7/9. This Roseobacter denitrificans (strain ATCC 33942 / OCh 114) (Erythrobacter sp. (strain OCh 114)) protein is Histidinol-phosphate aminotransferase.